We begin with the raw amino-acid sequence, 438 residues long: Protein maelstrom 1 (438 aa).

The segment at residues 2-69 (APKKRNGFMT…LERTAKKERL (68 aa)) is a DNA-binding region (HMG box). The tract at residues 374 to 438 (KEMGSRDLSP…NMGAGKKIAR (65 aa)) is disordered. Positions 381-391 (LSPSSSHQSVS) are enriched in polar residues.

Belongs to the maelstrom family.

It is found in the cytoplasm. The protein localises to the nucleus. Involved both in the piRNA and miRNA metabolic processes. As a component of the meiotic nuage, plays a central role during oogenesis by repressing transposable elements and preventing their mobilization, which is essential for the germline integrity. Repression of transposable elements is mediated via the piRNA metabolic process, which mediates the repression of transposable elements during meiosis by forming complexes composed of piRNAs and Piwi proteins and governs the repression of transposons. As a nuclear component, it is required for proper differentiation in the germline stem cell (GSC) lineage by repressing microRNA-7 (miR-7), thereby acting as an indirect regulator of bag-of-marbles (Bam). Acts by binding to the promoter of miR-7 gene and repressing its expression; miR-7 repression alleviates the Bam repression by miR-7, thereby allowing differentiation in the germline stem cell (GSC) lineage. This is Protein maelstrom 1 (mael1) from Drosophila persimilis (Fruit fly).